Here is a 55-residue protein sequence, read N- to C-terminus: MAKAANIKIKLLSTADTGFFYVTSKNSRTKTDKLSFRKYDPVAKKHVEFKETKIK.

It belongs to the bacterial ribosomal protein bL33 family.

The protein is Large ribosomal subunit protein bL33 of Mesorhizobium japonicum (strain LMG 29417 / CECT 9101 / MAFF 303099) (Mesorhizobium loti (strain MAFF 303099)).